Reading from the N-terminus, the 466-residue chain is Magnetosome-associated protein MamJ (466 aa).

Disordered regions lie at residues 1-23 (MAKNRRDRGTDLPGDGDQKISTG) and 60-80 (ANQGGLVETAQPPSAPIRSQD). The segment at 1–24 (MAKNRRDRGTDLPGDGDQKISTGP) is not required to restore magnetic response to deletion mutant. Positions 25-80 (EIVSVTVHPSPNLAAAAKPVQGDIWASLLESSPWSANQGGLVETAQPPSAPIRSQD) are required to restore magnetic response to deletion mutant. Tandem repeat unit repeat units follow at residues 81-168 (PVPV…VEPE) and 169-256 (PAPV…VEPE). Not required to restore magnetic response to deletion mutant stretches follow at residues 81 to 256 (PVPV…VEPE), 136 to 334 (ETDA…SQAE), 333 to 374 (AESV…AVEA), and 432 to 466 (VGSNVVAGTRRLAQTIEVSCGSCSSPKCDAEDKNK). Glu-Pro-rich motif repeat units follow at residues 145–164 (IEPEPALVEPVIEIEAEAAE), 233–252 (IEPEPALVEPVIEIEAEAAE), and 253–272 (VEPEPAPVEPVIEIEAEAAE). 2 required to restore magnetic response to deletion mutant regions span residues 375–432 (TRQP…GRLV) and 426–466 (VKGG…DKNK).

Belongs to the magnetosome MamJ protein family. As to quaternary structure, forms homooligomers. Interacts with MamK. Identified by N-terminal sequencing of a protein that is about 96 kDa in size. The protein runs anomalously on protein gels.

Its subcellular location is the magnetosome. Its function is as follows. Required for assembly of magnetosome chains. Regulates the dynamic behavior of MamK filaments. May connect magnetosomes to MamK filaments. Moves from the cell poles towards midcell; movement does not depend on the treadmilling ability of MamK, suggesting MamJ associates and disassociates continuously from the MamK filament. The protein is Magnetosome-associated protein MamJ of Magnetospirillum gryphiswaldense (strain DSM 6361 / JCM 21280 / NBRC 15271 / MSR-1).